Here is a 391-residue protein sequence, read N- to C-terminus: Trehalose-phosphate phosphatase (391 aa).

Aspartate 147 (nucleophile) is an active-site residue. Residues aspartate 147, aspartate 149, and aspartate 330 each coordinate Mg(2+). 147-149 (DFD) contributes to the substrate binding site.

It belongs to the trehalose phosphatase family. It depends on Mg(2+) as a cofactor.

It catalyses the reaction alpha,alpha-trehalose 6-phosphate + H2O = alpha,alpha-trehalose + phosphate. It participates in glycan biosynthesis; trehalose biosynthesis. Removes the phosphate from trehalose 6-phosphate to produce free trehalose. The protein is Trehalose-phosphate phosphatase (otsB) of Mycobacterium avium (strain 104).